The chain runs to 783 residues: Probable alpha,alpha-trehalose-phosphate synthase [UDP-forming] 3 (783 aa).

The interval 11–456 is glycosyltransferase; the sequence is QTLLVVANRL…GFDFLSELND (446 aa).

It in the N-terminal section; belongs to the glycosyltransferase 20 family. In the C-terminal section; belongs to the trehalose phosphatase family.

The catalysed reaction is D-glucose 6-phosphate + UDP-alpha-D-glucose = alpha,alpha-trehalose 6-phosphate + UDP + H(+). The polypeptide is Probable alpha,alpha-trehalose-phosphate synthase [UDP-forming] 3 (TPS3) (Arabidopsis thaliana (Mouse-ear cress)).